Here is an 894-residue protein sequence, read N- to C-terminus: Glutamate receptor 3 (894 aa).

The first 28 residues, methionine 1–glycine 28, serve as a signal peptide directing secretion. The Extracellular segment spans residues glycine 29–alanine 552. 5 N-linked (GlcNAc...) asparagine glycosylation sites follow: asparagine 63, asparagine 266, asparagine 380, asparagine 415, and asparagine 422. A disulfide bridge connects residues cysteine 91 and cysteine 340. Positions 508, 510, and 515 each coordinate L-glutamate. A helical membrane pass occupies residues tyrosine 553 to valine 573. Topologically, residues serine 574–glutamate 602 are cytoplasmic. The segment at residues phenylalanine 603 to glutamine 618 is an intramembrane region (helical; Pore-forming). Residues glutamine 619–cysteine 621 lie within the membrane without spanning it. Cysteine 621 carries the S-palmitoyl cysteine lipid modification. The Cytoplasmic segment spans residues aspartate 622 to serine 627. The helical transmembrane segment at leucine 628 to tyrosine 648 threads the bilayer. Residues threonine 649–asparagine 823 lie on the Extracellular side of the membrane. Residues serine 686, threonine 687, and glutamate 737 each coordinate L-glutamate. Cysteine 750 and cysteine 805 are joined by a disulfide. Residues valine 824–isoleucine 844 traverse the membrane as a helical segment. At glutamate 845 to isoleucine 894 the chain is on the cytoplasmic side. Cysteine 847 carries the S-palmitoyl cysteine lipid modification. Tyrosine 877 and tyrosine 887 each carry phosphotyrosine.

This sequence belongs to the glutamate-gated ion channel (TC 1.A.10.1) family. GRIA3 subfamily. In terms of assembly, homotetramer or heterotetramer of pore-forming glutamate receptor subunits. Tetramers may be formed by the dimerization of dimers. Interacts with PICK1, GRIP1 and GRIP2. Found in a complex with GRIA1, GRIA2, GRIA4, CNIH2, CNIH3, CACNG2, CACNG3, CACNG4, CACNG5, CACNG7 and CACNG8. Interacts with CACNG5. Found in a complex with GRIA1, GRIA2, GRIA4, DLG4, CACNG8 and CNIH2.

It localises to the cell membrane. The protein localises to the postsynaptic cell membrane. Its subcellular location is the postsynaptic density membrane. It catalyses the reaction Ca(2+)(in) = Ca(2+)(out). In terms of biological role, ionotropic glutamate receptor that functions as a ligand-gated cation channel, gated by L-glutamate and glutamatergic agonists such as alpha-amino-3-hydroxy-5-methyl-4-isoxazolepropionic acid (AMPA), quisqualic acid, and kainic acid. L-glutamate acts as an excitatory neurotransmitter at many synapses in the central nervous system and plays an important role in fast excitatory synaptic transmission by inducing long-term potentiation. Binding of the excitatory neurotransmitter L-glutamate induces a conformation change, leading to the opening of the cation channel, and thereby converts the chemical signal to an electrical impulse upon entry of calcium. The receptor then desensitizes rapidly and enters a transient inactive state, characterized by the presence of bound agonist. In the presence of CACNG8, shows resensitization which is characterized by a delayed accumulation of current flux upon continued application of glutamate. The chain is Glutamate receptor 3 from Macaca fascicularis (Crab-eating macaque).